The sequence spans 154 residues: UPF0178 protein H16_B0290 (154 aa).

Belongs to the UPF0178 family.

In Cupriavidus necator (strain ATCC 17699 / DSM 428 / KCTC 22496 / NCIMB 10442 / H16 / Stanier 337) (Ralstonia eutropha), this protein is UPF0178 protein H16_B0290.